A 147-amino-acid polypeptide reads, in one-letter code: MALRACGLIIFRRCLIPKVDNNAIEFLLLQASDGIHHWTPPKGHVEPGEDDLETALRETQEEAGIEAGQLTIIEGFKRELNYVARNKPKTVIYWLAEVKDYDVEIRLSHEHQAYRWLGLEEACQLAQFKEMKAALQEGHQFLCSIEA.

In terms of domain architecture, Nudix hydrolase spans 1–139 (MALRACGLII…EMKAALQEGH (139 aa)). N-acetylalanine is present on Ala2. A Nudix box motif is present at residues 43-64 (GHVEPGEDDLETALRETQEEAG).

The protein belongs to the Nudix hydrolase family. The cofactor is a divalent metal cation.

The enzyme catalyses P(1),P(4)-bis(5'-guanosyl) tetraphosphate + H2O = GMP + GTP + 2 H(+). The catalysed reaction is a 5'-end CoA-ribonucleoside in mRNA + H2O = a 5'-end phospho-adenosine-phospho-ribonucleoside in mRNA + (R)-4'-phosphopantetheine + 2 H(+). It catalyses the reaction a 5'-end FAD-phospho-ribonucleoside in mRNA + H2O = a 5'-end phospho-adenosine-phospho-ribonucleoside in mRNA + FMN + 2 H(+). Its function is as follows. Catalyzes the asymmetric hydrolysis of diadenosine 5',5'''-P1,P4-tetraphosphate (Ap4A) to yield AMP and ATP. Exhibits decapping activity towards FAD-capped RNAs and dpCoA-capped RNAs in vitro. This chain is Bis(5'-nucleosyl)-tetraphosphatase [asymmetrical] (NUDT2), found in Homo sapiens (Human).